The primary structure comprises 139 residues: Nucleoside diphosphate kinase (139 aa).

Residues lysine 10, phenylalanine 58, arginine 86, threonine 92, arginine 103, and asparagine 113 each coordinate ATP. Histidine 116 acts as the Pros-phosphohistidine intermediate in catalysis.

It belongs to the NDK family. Homotetramer. Requires Mg(2+) as cofactor.

It is found in the cytoplasm. It catalyses the reaction a 2'-deoxyribonucleoside 5'-diphosphate + ATP = a 2'-deoxyribonucleoside 5'-triphosphate + ADP. The enzyme catalyses a ribonucleoside 5'-diphosphate + ATP = a ribonucleoside 5'-triphosphate + ADP. Functionally, major role in the synthesis of nucleoside triphosphates other than ATP. The ATP gamma phosphate is transferred to the NDP beta phosphate via a ping-pong mechanism, using a phosphorylated active-site intermediate. The sequence is that of Nucleoside diphosphate kinase from Caulobacter sp. (strain K31).